The primary structure comprises 369 residues: Melanoma-associated antigen 10 (369 aa).

A disordered region spans residues 1 to 131; that stretch reads MPRAPKRQRC…VLPDSESLPR (131 aa). Residues 39–62 show a composition bias toward low complexity; it reads SSSTSTSSSFPSSFPSSSSSSSSS. 2 stretches are compositionally biased toward polar residues: residues 85–96 and 107–121; these read QSAQIACSSPSV and EGSSSQKEESPSTLQ. The region spanning 134–333 is the MAGE domain; the sequence is IDEKVTDLVQ…RSFPLWYEEA (200 aa). The tract at residues 340–369 is disordered; the sequence is RAQDRIATTDDTTAMASASSSATGSFSYPE. A compositionally biased stretch (low complexity) spans 348–369; the sequence is TDDTTAMASASSSATGSFSYPE.

As to expression, expressed in many tumors of several types, such as melanoma, head and neck squamous cell carcinoma, lung carcinoma and breast carcinoma, but not in normal tissues except for spermatogonia, spermatocytes and placenta.

Its subcellular location is the nucleus. Its function is as follows. Not known, though may play a role in embryonal development and tumor transformation or aspects of tumor progression. This Homo sapiens (Human) protein is Melanoma-associated antigen 10 (MAGEA10).